The following is a 797-amino-acid chain: N-acetylneuraminate (7)9-O-acetyltransferase (797 aa).

Over 1–18 (MAALAYNLGKREINHYFS) the chain is Cytoplasmic. Residues 19-39 (VRSAKVLALVAVLLLAACHLA) form a helical membrane-spanning segment. The Lumenal portion of the chain corresponds to 40–313 (SRRYRGNDSC…QPRPPVTLIQ (274 aa)). Asparagine 46 carries an N-linked (GlcNAc...) asparagine glycan. Serine 94 functions as the Acyl-ester intermediate in the catalytic mechanism. Asparagine 175 and asparagine 187 each carry an N-linked (GlcNAc...) asparagine glycan. Catalysis depends on residues aspartate 270 and histidine 273. Residues 314 to 334 (KLAACFFTLSIIGYLIFYIIH) form a helical membrane-spanning segment. Residues 335–363 (RNAHRKNKPCTDLESGEEKKNIINTPVSS) lie on the Cytoplasmic side of the membrane. A helical membrane pass occupies residues 364-384 (LEILLQSFCKLGLIMAYFYMC). Residues 385–395 (DRANLFMKENK) lie on the Lumenal side of the membrane. Residues 396–416 (FYTHSSFFIPIIYILVLGVFY) traverse the membrane as a helical segment. At 417–439 (NENTKETKVLNREQTDEWKGWMQ) the chain is on the cytoplasmic side. The chain crosses the membrane as a helical span at residues 440 to 460 (LVILIYHISGASTFLPVYMHI). Arginine 461 is a topological domain (lumenal). The helical transmembrane segment at 462–482 (VLVAAYLFQTGYGHFSYFWIK) threads the bilayer. At 483 to 486 (GDFG) the chain is on the cytoplasmic side. A helical transmembrane segment spans residues 487–507 (IYRVCQVLFRLNFLVVVLCIV). Topologically, residues 508-513 (MDRPYQ) are lumenal. The chain crosses the membrane as a helical span at residues 514–534 (FYYFVPLVTVWFMVIYVTLAL). Residues 535–547 (WPQIIQKKANGNC) lie on the Cytoplasmic side of the membrane. Residues 548 to 568 (FWHFGLLLKLGFLLLFICFLA) form a helical membrane-spanning segment. Topologically, residues 569-605 (YSQGAFEKIFSLWPLSKCFELKGNVYEWWFRWRLDRY) are lumenal. A helical transmembrane segment spans residues 606–626 (VVFHGMLFAFIYLALQKRQIL). The Cytoplasmic portion of the chain corresponds to 627–638 (SEGKGEPLFSNK). The helical transmembrane segment at 639–659 (ISNFLLFISVVSFLTYSIWAS) threads the bilayer. At 660 to 671 (SCKNKAECNELH) the chain is on the lumenal side. Residues 672-692 (PSVSVVQILAFILIRNIPGYA) traverse the membrane as a helical segment. Residues 693–698 (RSVYSS) are Cytoplasmic-facing. A helical transmembrane segment spans residues 699-719 (FFAWFGKISLELFICQYHIWL). The Lumenal portion of the chain corresponds to 720–725 (AADTRG). A helical membrane pass occupies residues 726-746 (ILVLIPGNPMLNIIVSTFIFV). Residues 747–770 (CVAHEISQITNDLAQIIIPKDNSS) lie on the Cytoplasmic side of the membrane. The chain crosses the membrane as a helical span at residues 771–791 (LLKRLACIAAFFCGLLILSSI). At 792 to 797 (QDKSKH) the chain is on the lumenal side.

This sequence belongs to the PC-esterase family. CASD1 subfamily. N-glycosylated. In terms of tissue distribution, highly expressed in peripheral B lymphocytes.

The protein resides in the golgi apparatus membrane. It catalyses the reaction CMP-N-acetyl-beta-neuraminate + acetyl-CoA = CMP-N-acetyl-9-O-acetyl-beta-neuraminate + CoA. The enzyme catalyses a ganglioside GD3 (d18:1(4E)) + acetyl-CoA = a ganglioside Ac-O-7-GD3(d18:1(4E)) + CoA. The catalysed reaction is CMP-N-acetyl-beta-neuraminate + acetyl-CoA = CMP-N-acetyl-7-O-acetyl-beta-neuraminate + CoA. Its function is as follows. Key enzyme in the biosynthesis of O-acetylated (O-Ac) sialoglycans such as gangliosides O-AcGD3 and O-AcGD2, which affect various processes such as cell-cell interactions, host-pathogen recognition. Catalyzes the transfer of an acetyl group from a donor, the acetyl-coenzyme-A molecule (acetyl-CoA), to the C7/8/9 OH-position of a sialic acid residue. The primary site of O-acetyl group transfer on sialic acid seems to depend on cell type and can be C7, from which the O-acetyl group could subsequently migrate to the C8 and then to the C9 position, or at C9 with possibility of migrating to the C8 and then to the C7 position. Together with ST8SIA1 (GD3 synthase) it increases the levels of ganglioside Ac-O-7-GD3. Can transfer the acetyl group from acetyl-CoA to free sialate (N-acetylneuraminate, Neu5Ac) in vitro, but has preferred substrate specificity for CMP-activated sialate (CMP-Neu5Ac), resulting in the formation of 9-O-acetylated CMP-Neu5Ac (CMP-Neu5,9Ac2). CMP-Neu5,9Ac2 may be used by sialyltransferases as a sialate donor for glycoconjugate acceptors such as ganglioside GD3. O-acetylation at position C9 of ganglioside GD3 can counteract the pro-apoptotic effects of the ganglioside GD3 in tumor cells. This is N-acetylneuraminate (7)9-O-acetyltransferase from Homo sapiens (Human).